We begin with the raw amino-acid sequence, 240 residues long: Adenosylcobinamide-GDP ribazoletransferase (240 aa).

Transmembrane regions (helical) follow at residues 31 to 51, 57 to 77, 109 to 129, 133 to 153, and 185 to 205; these read LLYY…ASHL, APLH…ALHL, IAVV…WVLV, VGAQ…GLFL, and LFCL…FAWL.

It belongs to the CobS family. Mg(2+) serves as cofactor.

It is found in the cell inner membrane. The enzyme catalyses alpha-ribazole + adenosylcob(III)inamide-GDP = adenosylcob(III)alamin + GMP + H(+). It catalyses the reaction alpha-ribazole 5'-phosphate + adenosylcob(III)inamide-GDP = adenosylcob(III)alamin 5'-phosphate + GMP + H(+). It functions in the pathway cofactor biosynthesis; adenosylcobalamin biosynthesis; adenosylcobalamin from cob(II)yrinate a,c-diamide: step 7/7. In terms of biological role, joins adenosylcobinamide-GDP and alpha-ribazole to generate adenosylcobalamin (Ado-cobalamin). Also synthesizes adenosylcobalamin 5'-phosphate from adenosylcobinamide-GDP and alpha-ribazole 5'-phosphate. This chain is Adenosylcobinamide-GDP ribazoletransferase, found in Pseudomonas putida (strain GB-1).